Here is a 360-residue protein sequence, read N- to C-terminus: Ribosomal RNA large subunit methyltransferase M (360 aa).

S-adenosyl-L-methionine-binding positions include S187, 220-223 (CPGG), D239, D259, and D276. K305 serves as the catalytic Proton acceptor.

It belongs to the class I-like SAM-binding methyltransferase superfamily. RNA methyltransferase RlmE family. RlmM subfamily. As to quaternary structure, monomer.

Its subcellular location is the cytoplasm. The enzyme catalyses cytidine(2498) in 23S rRNA + S-adenosyl-L-methionine = 2'-O-methylcytidine(2498) in 23S rRNA + S-adenosyl-L-homocysteine + H(+). Functionally, catalyzes the 2'-O-methylation at nucleotide C2498 in 23S rRNA. This Shewanella halifaxensis (strain HAW-EB4) protein is Ribosomal RNA large subunit methyltransferase M.